The chain runs to 76 residues: Translational regulator CsrA (76 aa).

This sequence belongs to the CsrA/RsmA family. Homodimer; the beta-strands of each monomer intercalate to form a hydrophobic core, while the alpha-helices form wings that extend away from the core.

It localises to the cytoplasm. Functionally, a translational regulator that binds mRNA to regulate translation initiation and/or mRNA stability. Usually binds in the 5'-UTR at or near the Shine-Dalgarno sequence preventing ribosome-binding, thus repressing translation. Its main target seems to be the major flagellin gene, while its function is anatagonized by FliW. This chain is Translational regulator CsrA, found in Helicobacter pylori (strain J99 / ATCC 700824) (Campylobacter pylori J99).